The primary structure comprises 406 residues: Cysteine desulfurase (406 aa).

An N6-(pyridoxal phosphate)lysine modification is found at lysine 226. Cysteine 364 serves as the catalytic Cysteine persulfide intermediate.

Belongs to the class-V pyridoxal-phosphate-dependent aminotransferase family. Csd subfamily. Homodimer. Interacts with SufE and the SufBCD complex composed of SufB, SufC and SufD. The interaction with SufE is required to mediate the direct transfer of the sulfur atom from the S-sulfanylcysteine. Requires pyridoxal 5'-phosphate as cofactor.

Its subcellular location is the cytoplasm. It catalyses the reaction (sulfur carrier)-H + L-cysteine = (sulfur carrier)-SH + L-alanine. It carries out the reaction L-selenocysteine + AH2 = hydrogenselenide + L-alanine + A + H(+). It participates in cofactor biosynthesis; iron-sulfur cluster biosynthesis. In terms of biological role, cysteine desulfurases mobilize the sulfur from L-cysteine to yield L-alanine, an essential step in sulfur metabolism for biosynthesis of a variety of sulfur-containing biomolecules. Component of the suf operon, which is activated and required under specific conditions such as oxidative stress and iron limitation. Acts as a potent selenocysteine lyase in vitro, that mobilizes selenium from L-selenocysteine. Selenocysteine lyase activity is however unsure in vivo. This is Cysteine desulfurase (sufS) from Shigella flexneri.